The primary structure comprises 93 residues: Large ribosomal subunit protein bL31 (93 aa).

Residues 68 to 93 are disordered; the sequence is GSADAAADEKKPDAKNNNKDNTSKED. Basic and acidic residues predominate over residues 74 to 93; that stretch reads ADEKKPDAKNNNKDNTSKED.

This sequence belongs to the bacterial ribosomal protein bL31 family. Type A subfamily. In terms of assembly, part of the 50S ribosomal subunit.

Binds the 23S rRNA. This chain is Large ribosomal subunit protein bL31, found in Prochlorococcus marinus (strain MIT 9313).